The chain runs to 464 residues: tRNA-2-methylthio-N(6)-dimethylallyladenosine synthase (464 aa).

The 117-residue stretch at 19–135 (GSYWITTFGC…LENLLERVDL (117 aa)) folds into the MTTase N-terminal domain. [4Fe-4S] cluster-binding residues include C28, C64, C98, C170, C174, and C177. One can recognise a Radical SAM core domain in the interval 156-393 (RDSSICGWVN…NELVETTSRK (238 aa)). The region spanning 396 to 464 (QRYLNNIESV…SFSLSGQIYK (69 aa)) is the TRAM domain.

This sequence belongs to the methylthiotransferase family. MiaB subfamily. Monomer. Requires [4Fe-4S] cluster as cofactor.

It localises to the cytoplasm. The catalysed reaction is N(6)-dimethylallyladenosine(37) in tRNA + (sulfur carrier)-SH + AH2 + 2 S-adenosyl-L-methionine = 2-methylsulfanyl-N(6)-dimethylallyladenosine(37) in tRNA + (sulfur carrier)-H + 5'-deoxyadenosine + L-methionine + A + S-adenosyl-L-homocysteine + 2 H(+). Catalyzes the methylthiolation of N6-(dimethylallyl)adenosine (i(6)A), leading to the formation of 2-methylthio-N6-(dimethylallyl)adenosine (ms(2)i(6)A) at position 37 in tRNAs that read codons beginning with uridine. In Prochlorococcus marinus subsp. pastoris (strain CCMP1986 / NIES-2087 / MED4), this protein is tRNA-2-methylthio-N(6)-dimethylallyladenosine synthase.